Here is a 329-residue protein sequence, read N- to C-terminus: Cathepsin K (329 aa).

The first 15 residues, 1–15, serve as a signal peptide directing secretion; that stretch reads MWGLKVLLLPVVSFA. Positions 16–114 are cleaved as a propeptide — activation peptide; the sequence is LHPEEILDTQ…TLYIPDWEGR (99 aa). An N-linked (GlcNAc...) asparagine glycan is attached at N103. 2 cysteine pairs are disulfide-bonded: C136-C177 and C170-C210. C139 is an active-site residue. N-linked (GlcNAc...) asparagine glycosylation occurs at N268. C269 and C318 are oxidised to a cystine. Catalysis depends on residues H276 and N296.

The protein belongs to the peptidase C1 family. As to expression, predominantly expressed in osteclasts (bones).

The protein resides in the lysosome. Its subcellular location is the secreted. The protein localises to the apical cell membrane. It carries out the reaction Broad proteolytic activity. With small-molecule substrates and inhibitors, the major determinant of specificity is P2, which is preferably Leu, Met &gt; Phe, and not Arg.. In terms of biological role, thiol protease involved in osteoclastic bone resorption and may participate partially in the disorder of bone remodeling. Displays potent endoprotease activity against fibrinogen at acid pH. May play an important role in extracellular matrix degradation. Involved in the release of thyroid hormone thyroxine (T4) by limited proteolysis of TG/thyroglobulin in the thyroid follicle lumen. This chain is Cathepsin K (CTSK), found in Oryctolagus cuniculus (Rabbit).